The chain runs to 169 residues: Peptide deformylase (169 aa).

Residues cysteine 91 and histidine 133 each coordinate Fe cation. Glutamate 134 is an active-site residue. Histidine 137 provides a ligand contact to Fe cation.

The protein belongs to the polypeptide deformylase family. It depends on Fe(2+) as a cofactor.

It carries out the reaction N-terminal N-formyl-L-methionyl-[peptide] + H2O = N-terminal L-methionyl-[peptide] + formate. Functionally, removes the formyl group from the N-terminal Met of newly synthesized proteins. Requires at least a dipeptide for an efficient rate of reaction. N-terminal L-methionine is a prerequisite for activity but the enzyme has broad specificity at other positions. This chain is Peptide deformylase, found in Escherichia coli (strain K12 / DH10B).